A 144-amino-acid polypeptide reads, in one-letter code: Superoxide dismutase [Mn] 1 (144 aa).

Mn(2+) contacts are provided by His42, Asp124, and His128.

It belongs to the iron/manganese superoxide dismutase family. The cofactor is Mn(2+).

It carries out the reaction 2 superoxide + 2 H(+) = H2O2 + O2. Its function is as follows. Destroys superoxide anion radicals which are normally produced within the cells and which are toxic to biological systems. The polypeptide is Superoxide dismutase [Mn] 1 (sod1) (Haloferax mediterranei (Halobacterium mediterranei)).